We begin with the raw amino-acid sequence, 345 residues long: Protein RecA (345 aa).

80–87 (GPESSGKT) serves as a coordination point for ATP.

It belongs to the RecA family.

The protein localises to the cytoplasm. In terms of biological role, can catalyze the hydrolysis of ATP in the presence of single-stranded DNA, the ATP-dependent uptake of single-stranded DNA by duplex DNA, and the ATP-dependent hybridization of homologous single-stranded DNAs. It interacts with LexA causing its activation and leading to its autocatalytic cleavage. This Mycoplasma mycoides subsp. mycoides SC (strain CCUG 32753 / NCTC 10114 / PG1) protein is Protein RecA.